Consider the following 387-residue polypeptide: ERBB-3 BINDING PROTEIN 1 (387 aa).

Necessary for nucleolar localization regions lie at residues 1 to 49 and 297 to 387; these read MSDD…IVDL and LLQP…PMEG. Residues 47–55 form an RNA-binding region; the sequence is VDLCEKGDA. The interval 337–387 is disordered; sequence LQPTKTTENEPEIKAWLALPTKTKKKGGGKKKKGKKGDKVEEASQAEPMEG. The segment at 356–373 is interaction with RNA; that stretch reads PTKTKKKGGGKKKKGKKG. Residues 358–372 show a composition bias toward basic residues; the sequence is KTKKKGGGKKKKGKK. The short motif at 360–369 is the Nuclear localization signal element; sequence KKKGGGKKKK.

The protein belongs to the peptidase M24 family. As to quaternary structure, component of a ribonucleoprotein complex. As to expression, expressed during tuberisation and in roots, nodes, internodes, petioles, leaves, stolons, tubers and sprouts.

Its subcellular location is the nucleus. Functionally, binds RNA. Associates with 28S, 18S and 5.8S mature rRNAs, several rRNA precursors and probably U3 small nucleolar RNA. May be involved in regulation of intermediate and late steps of rRNA processing. May be involved in ribosome assembly. Required for expression of cell cycle genes such as CYCD3-1, RNR2A and CDKB1-1. Promotes, in a dose- and auxin-dependent manner, organ growth by stimulating both cell proliferation and expansion, via the regulation of RBR1 levels. The sequence is that of ERBB-3 BINDING PROTEIN 1 from Solanum tuberosum (Potato).